The following is a 414-amino-acid chain: DNA polymerase IV (414 aa).

The UmuC domain maps to 8–189 (IFHIDMNSFY…LPIEEMHGIG (182 aa)). The Mg(2+) site is built by D12 and D108. E109 is a catalytic residue. A disordered region spans residues 394-414 (EESKTRGTSFNRDFFQDEKKR).

The protein belongs to the DNA polymerase type-Y family. In terms of assembly, monomer. It depends on Mg(2+) as a cofactor.

The protein resides in the cytoplasm. It catalyses the reaction DNA(n) + a 2'-deoxyribonucleoside 5'-triphosphate = DNA(n+1) + diphosphate. Functionally, poorly processive, error-prone DNA polymerase involved in untargeted mutagenesis. Copies undamaged DNA at stalled replication forks, which arise in vivo from mismatched or misaligned primer ends. These misaligned primers can be extended by PolIV. Exhibits no 3'-5' exonuclease (proofreading) activity. May be involved in translesional synthesis, in conjunction with the beta clamp from PolIII. In Bacillus velezensis (strain DSM 23117 / BGSC 10A6 / LMG 26770 / FZB42) (Bacillus amyloliquefaciens subsp. plantarum), this protein is DNA polymerase IV.